We begin with the raw amino-acid sequence, 413 residues long: Tryptophan synthase beta chain (413 aa).

At lysine 106 the chain carries N6-(pyridoxal phosphate)lysine.

This sequence belongs to the TrpB family. In terms of assembly, tetramer of two alpha and two beta chains. It depends on pyridoxal 5'-phosphate as a cofactor.

The enzyme catalyses (1S,2R)-1-C-(indol-3-yl)glycerol 3-phosphate + L-serine = D-glyceraldehyde 3-phosphate + L-tryptophan + H2O. Its pathway is amino-acid biosynthesis; L-tryptophan biosynthesis; L-tryptophan from chorismate: step 5/5. In terms of biological role, the beta subunit is responsible for the synthesis of L-tryptophan from indole and L-serine. The chain is Tryptophan synthase beta chain from Methylorubrum populi (strain ATCC BAA-705 / NCIMB 13946 / BJ001) (Methylobacterium populi).